The following is a 256-amino-acid chain: Nuclear shuttle protein (256 aa).

The Bipartite nuclear localization signal signature appears at 18–39; sequence NTTNRFPIRRKYVGGHTRPSVR. Positions 81-96 match the Nuclear localization signal motif; the sequence is SRGPSGDGRSRDYIKL. Residues 150–187 form an interaction with Arabidopsis thaliana NSI protein region; sequence ELFGAYSACYVNLRLLNNQQHRYRVLHSVKRFVSSAGD.

It belongs to the begomovirus nuclear shuttle protein family. As to quaternary structure, binds to single-stranded and double-stranded viral DNA. Interacts with the host nuclear shuttle interacting (NSI) protein. This interaction may allow NSP to recruit NSI monomers to the viral genome and thus regulate nuclear export of viral genome by NSP.

It is found in the host nucleus. Its subcellular location is the host cytoplasm. It localises to the host cell membrane. In terms of biological role, binds to the genomic viral ssDNA, shuttles it into and out of the cell nucleus. Begomoviruses use 2 proteins to transport their DNA from cell to cell. The nuclear shuttle protein (NSP) shuttles it between nucleus and cytoplasm and the movement protein (MP) probably transports the DNA-NSP complex to the cell periphery and facilitates movement across the cell wall. The polypeptide is Nuclear shuttle protein (Hewittia sublobata (Coralbush)).